A 315-amino-acid chain; its full sequence is Acetyl-coenzyme A carboxylase carboxyl transferase subunit alpha (315 aa).

Residues 40–293 (LQDKSKTLTE…REELSSQLAM (254 aa)) enclose the CoA carboxyltransferase C-terminal domain.

This sequence belongs to the AccA family. Acetyl-CoA carboxylase is a heterohexamer composed of biotin carboxyl carrier protein (AccB), biotin carboxylase (AccC) and two subunits each of ACCase subunit alpha (AccA) and ACCase subunit beta (AccD).

Its subcellular location is the cytoplasm. The catalysed reaction is N(6)-carboxybiotinyl-L-lysyl-[protein] + acetyl-CoA = N(6)-biotinyl-L-lysyl-[protein] + malonyl-CoA. It participates in lipid metabolism; malonyl-CoA biosynthesis; malonyl-CoA from acetyl-CoA: step 1/1. Functionally, component of the acetyl coenzyme A carboxylase (ACC) complex. First, biotin carboxylase catalyzes the carboxylation of biotin on its carrier protein (BCCP) and then the CO(2) group is transferred by the carboxyltransferase to acetyl-CoA to form malonyl-CoA. This chain is Acetyl-coenzyme A carboxylase carboxyl transferase subunit alpha, found in Pseudomonas syringae pv. syringae (strain B728a).